The primary structure comprises 426 residues: Bifunctional protein GlmU (426 aa).

The segment at 1-216 (MSEVDVVILA…WHDILGVNTQ (216 aa)) is pyrophosphorylase. UDP-N-acetyl-alpha-D-glucosamine is bound by residues 9–12 (LAAG), K23, and Q69. A Mg(2+)-binding site is contributed by D97. Positions 132, 148, 163, and 214 each coordinate UDP-N-acetyl-alpha-D-glucosamine. N214 lines the Mg(2+) pocket. A linker region spans residues 217–237 (QQLAAVSKIARKRINDQIMAN). The interval 238-426 (GVTMIDPLTT…AKHDQRDDQP (189 aa)) is N-acetyltransferase. UDP-N-acetyl-alpha-D-glucosamine contacts are provided by R286 and K304. H316 (proton acceptor) is an active-site residue. 2 residues coordinate UDP-N-acetyl-alpha-D-glucosamine: Y319 and N330. Acetyl-CoA-binding positions include A333, 339–340 (NY), S358, A376, and R393.

In the N-terminal section; belongs to the N-acetylglucosamine-1-phosphate uridyltransferase family. It in the C-terminal section; belongs to the transferase hexapeptide repeat family. As to quaternary structure, homotrimer. Mg(2+) is required as a cofactor.

The protein resides in the cytoplasm. It carries out the reaction alpha-D-glucosamine 1-phosphate + acetyl-CoA = N-acetyl-alpha-D-glucosamine 1-phosphate + CoA + H(+). It catalyses the reaction N-acetyl-alpha-D-glucosamine 1-phosphate + UTP + H(+) = UDP-N-acetyl-alpha-D-glucosamine + diphosphate. The protein operates within nucleotide-sugar biosynthesis; UDP-N-acetyl-alpha-D-glucosamine biosynthesis; N-acetyl-alpha-D-glucosamine 1-phosphate from alpha-D-glucosamine 6-phosphate (route II): step 2/2. It functions in the pathway nucleotide-sugar biosynthesis; UDP-N-acetyl-alpha-D-glucosamine biosynthesis; UDP-N-acetyl-alpha-D-glucosamine from N-acetyl-alpha-D-glucosamine 1-phosphate: step 1/1. It participates in bacterial outer membrane biogenesis; LPS lipid A biosynthesis. Its function is as follows. Catalyzes the last two sequential reactions in the de novo biosynthetic pathway for UDP-N-acetylglucosamine (UDP-GlcNAc). The C-terminal domain catalyzes the transfer of acetyl group from acetyl coenzyme A to glucosamine-1-phosphate (GlcN-1-P) to produce N-acetylglucosamine-1-phosphate (GlcNAc-1-P), which is converted into UDP-GlcNAc by the transfer of uridine 5-monophosphate (from uridine 5-triphosphate), a reaction catalyzed by the N-terminal domain. This Oenococcus oeni (strain ATCC BAA-331 / PSU-1) protein is Bifunctional protein GlmU.